The following is a 429-amino-acid chain: MSVIAITVFIVTYALIASDRVNKTLAALTGAAIVVTLPIINSEDVFYSHETGIDWEVIFLLLSMMIIVSVLRQTGVFEYVAIWTAKRSHGSPLRILLLLVLVMALGSALLDNVTTVLLIAPVTLLVCERLTINAAPFLMAEVFASNIGGAATLVGDPPNIIIASRAGFSFNDFLIHLTPIVIIVTVVLSALLPRLFRGAFAVDPERVADIMSLNEREAIRDRWLLIKCGVVLLLVFVAFIAHPVLHTGPSLVGMLGAGILIVISKLERSDYLSSVKWETLLFFAGLFIMVGALVKTDVVNQLARATTTLTGGHELLTVVLTLGVSTLVSSIIDNIPYVATMTPIVSELVASMPDQSHTDILWWALALGADFGGNLTAVGASANVVMLEIAKSAGTPISFWEFTRKGIAVTVISIALAGIYLWLRYLVMS.

The next 9 helical transmembrane spans lie at 26-46 (AALTGAAIVVTLPIINSEDVF), 51-71 (TGIDWEVIFLLLSMMIIVSVL), 99-119 (LVLVMALGSALLDNVTTVLLI), 173-193 (FLIHLTPIVIIVTVVLSALLP), 224-244 (LLIKCGVVLLLVFVAFIAHPV), 279-299 (TLLFFAGLFIMVGALVKTDVV), 315-335 (LLTVVLTLGVSTLVSSIIDNI), 360-380 (ILWWALALGADFGGNLTAVGA), and 407-427 (IAVTVISIALAGIYLWLRYLV).

This sequence belongs to the CitM (TC 2.A.11) transporter family.

It is found in the cell membrane. This Mycobacterium leprae (strain TN) protein is 46 kDa membrane protein (ag45).